The chain runs to 597 residues: Elongation factor 4 (597 aa).

The tr-type G domain occupies 2-184; sequence KNIRNFSIIA…EIVAKIPAPT (183 aa). Residues 14-19 and 131-134 contribute to the GTP site; these read DHGKST and NKID.

Belongs to the TRAFAC class translation factor GTPase superfamily. Classic translation factor GTPase family. LepA subfamily.

The protein localises to the cell inner membrane. It carries out the reaction GTP + H2O = GDP + phosphate + H(+). Required for accurate and efficient protein synthesis under certain stress conditions. May act as a fidelity factor of the translation reaction, by catalyzing a one-codon backward translocation of tRNAs on improperly translocated ribosomes. Back-translocation proceeds from a post-translocation (POST) complex to a pre-translocation (PRE) complex, thus giving elongation factor G a second chance to translocate the tRNAs correctly. Binds to ribosomes in a GTP-dependent manner. The chain is Elongation factor 4 from Neisseria meningitidis serogroup C / serotype 2a (strain ATCC 700532 / DSM 15464 / FAM18).